Here is a 75-residue protein sequence, read N- to C-terminus: Exodeoxyribonuclease 7 small subunit (75 aa).

Belongs to the XseB family. Heterooligomer composed of large and small subunits.

It localises to the cytoplasm. The enzyme catalyses Exonucleolytic cleavage in either 5'- to 3'- or 3'- to 5'-direction to yield nucleoside 5'-phosphates.. Bidirectionally degrades single-stranded DNA into large acid-insoluble oligonucleotides, which are then degraded further into small acid-soluble oligonucleotides. The chain is Exodeoxyribonuclease 7 small subunit from Caldanaerobacter subterraneus subsp. tengcongensis (strain DSM 15242 / JCM 11007 / NBRC 100824 / MB4) (Thermoanaerobacter tengcongensis).